The sequence spans 264 residues: S-adenosylmethionine decarboxylase proenzyme (264 aa).

Ser112 functions as the Schiff-base intermediate with substrate; via pyruvic acid in the catalytic mechanism. Ser112 carries the pyruvic acid (Ser); by autocatalysis modification. His117 acts as the Proton acceptor; for processing activity in catalysis. The active-site Proton donor; for catalytic activity is the Cys140.

The protein belongs to the prokaryotic AdoMetDC family. Type 2 subfamily. As to quaternary structure, heterooctamer of four alpha and four beta chains arranged as a tetramer of alpha/beta heterodimers. Requires pyruvate as cofactor. In terms of processing, is synthesized initially as an inactive proenzyme. Formation of the active enzyme involves a self-maturation process in which the active site pyruvoyl group is generated from an internal serine residue via an autocatalytic post-translational modification. Two non-identical subunits are generated from the proenzyme in this reaction, and the pyruvate is formed at the N-terminus of the alpha chain, which is derived from the carboxyl end of the proenzyme. The post-translation cleavage follows an unusual pathway, termed non-hydrolytic serinolysis, in which the side chain hydroxyl group of the serine supplies its oxygen atom to form the C-terminus of the beta chain, while the remainder of the serine residue undergoes an oxidative deamination to produce ammonia and the pyruvoyl group blocking the N-terminus of the alpha chain.

The enzyme catalyses S-adenosyl-L-methionine + H(+) = S-adenosyl 3-(methylsulfanyl)propylamine + CO2. It functions in the pathway amine and polyamine biosynthesis; S-adenosylmethioninamine biosynthesis; S-adenosylmethioninamine from S-adenosyl-L-methionine: step 1/1. Its function is as follows. Catalyzes the decarboxylation of S-adenosylmethionine to S-adenosylmethioninamine (dcAdoMet), the propylamine donor required for the synthesis of the polyamines spermine and spermidine from the diamine putrescine. The protein is S-adenosylmethionine decarboxylase proenzyme of Salmonella dublin (strain CT_02021853).